The following is a 324-amino-acid chain: Spheroidene monooxygenase (324 aa).

Residues 226-324 (GKDPVGEALT…PGKGGRKENA (99 aa)) are disordered. 2 stretches are compositionally biased toward low complexity: residues 248–278 (PAAA…VEMP) and 287–313 (VVEA…NFKG).

The protein belongs to the CrtA family. Heme serves as cofactor.

It catalyses the reaction spheroidene + 4 reduced [2Fe-2S]-[ferredoxin] + 2 O2 + 4 H(+) = spheroiden-2-one + 4 oxidized [2Fe-2S]-[ferredoxin] + 3 H2O. It carries out the reaction spheroidene + 2 reduced [2Fe-2S]-[ferredoxin] + O2 + 2 H(+) = 2-hydroxyspheroidene + 2 oxidized [2Fe-2S]-[ferredoxin] + H2O. The catalysed reaction is 2-hydroxyspheroidene + 2 reduced [2Fe-2S]-[ferredoxin] + O2 + 2 H(+) = 2,2-dihydroxyspheroidene + 2 oxidized [2Fe-2S]-[ferredoxin] + H2O. The enzyme catalyses 2,2-dihydroxyspheroidene = spheroiden-2-one + H2O. It functions in the pathway carotenoid biosynthesis; spheroidene biosynthesis. Its function is as follows. Involved in the biosynthesis of the carotenoid spheroidene. Catalyzes the introduction of one keto group at the C-2 position of spheroidene. In vitro, can use nonnative substrates and produce oxocarotenoids with a hydroxy and/or a keto group, derived from neurosporene, lycopene, 3,4-didehydrolycopene or 3,4,3',4'-tetradehydrolycopene. This Cereibacter sphaeroides (strain ATCC 17023 / DSM 158 / JCM 6121 / CCUG 31486 / LMG 2827 / NBRC 12203 / NCIMB 8253 / ATH 2.4.1.) (Rhodobacter sphaeroides) protein is Spheroidene monooxygenase.